The following is a 248-amino-acid chain: MFQKVEGIVIRTTDYGETNKIVTIYSREFGKVSAMARGAKKPKSRLAAISQLMTHGHFLIQMGSGLGTLQQGEIISSMKEIREDIFLTAYASFIIELTDKATEDKKHNPYLFEMLYQTLHYMCEGVDPEVLSLIYQTKMLPVLGMRPYFDTCAICHQETDFVAFSVREGGFLCSRHAEQDPYRIPVGEAVHKLLRLFFHFDLHRLGNVSVKDSTKKQMRTVLNTYYDEYCGIYLKTRRFLEQLDKFQI.

Belongs to the RecO family.

Involved in DNA repair and RecF pathway recombination. This is DNA repair protein RecO from Bacillus mycoides (strain KBAB4) (Bacillus weihenstephanensis).